The primary structure comprises 386 residues: Erythronate-4-phosphate dehydrogenase (386 aa).

Substrate contacts are provided by S59 and T81. NAD(+) is bound at residue D162. R239 is a catalytic residue. D262 provides a ligand contact to NAD(+). Residue E267 is part of the active site. H284 functions as the Proton donor in the catalytic mechanism. Position 287 (G287) interacts with NAD(+). Y288 provides a ligand contact to substrate.

It belongs to the D-isomer specific 2-hydroxyacid dehydrogenase family. PdxB subfamily. As to quaternary structure, homodimer.

It is found in the cytoplasm. The catalysed reaction is 4-phospho-D-erythronate + NAD(+) = (R)-3-hydroxy-2-oxo-4-phosphooxybutanoate + NADH + H(+). The protein operates within cofactor biosynthesis; pyridoxine 5'-phosphate biosynthesis; pyridoxine 5'-phosphate from D-erythrose 4-phosphate: step 2/5. Functionally, catalyzes the oxidation of erythronate-4-phosphate to 3-hydroxy-2-oxo-4-phosphonooxybutanoate. This is Erythronate-4-phosphate dehydrogenase from Psychrobacter cryohalolentis (strain ATCC BAA-1226 / DSM 17306 / VKM B-2378 / K5).